Here is a 383-residue protein sequence, read N- to C-terminus: Chaperone protein DnaJ (383 aa).

One can recognise a J domain in the interval Asp-6–Gly-70. A CR-type zinc finger spans residues Gly-140–Arg-222. Positions 153, 156, 170, 173, 196, 199, 210, and 213 each coordinate Zn(2+). 4 CXXCXGXG motif repeats span residues Cys-153–Gly-160, Cys-170–Gly-177, Cys-196–Gly-203, and Cys-210–Gly-217.

This sequence belongs to the DnaJ family. Homodimer. Zn(2+) is required as a cofactor.

It localises to the cytoplasm. Its function is as follows. Participates actively in the response to hyperosmotic and heat shock by preventing the aggregation of stress-denatured proteins and by disaggregating proteins, also in an autonomous, DnaK-independent fashion. Unfolded proteins bind initially to DnaJ; upon interaction with the DnaJ-bound protein, DnaK hydrolyzes its bound ATP, resulting in the formation of a stable complex. GrpE releases ADP from DnaK; ATP binding to DnaK triggers the release of the substrate protein, thus completing the reaction cycle. Several rounds of ATP-dependent interactions between DnaJ, DnaK and GrpE are required for fully efficient folding. Also involved, together with DnaK and GrpE, in the DNA replication of plasmids through activation of initiation proteins. The chain is Chaperone protein DnaJ from Latilactobacillus sakei subsp. sakei (strain 23K) (Lactobacillus sakei subsp. sakei).